We begin with the raw amino-acid sequence, 225 residues long: UPF0758 protein BCQ_4241 (225 aa).

Residues 103–225 (SIRSPEDCAR…FVSLKEKGHI (123 aa)) form the MPN domain. 3 residues coordinate Zn(2+): His174, His176, and Asp187. Residues 174–187 (HNHPSGDPAPSRED) carry the JAMM motif motif.

Belongs to the UPF0758 family.

The chain is UPF0758 protein BCQ_4241 from Bacillus cereus (strain Q1).